The sequence spans 297 residues: Malonyl-[acyl-carrier protein] O-methyltransferase (297 aa).

This sequence belongs to the methyltransferase superfamily.

The enzyme catalyses malonyl-[ACP] + S-adenosyl-L-methionine = malonyl-[ACP] methyl ester + S-adenosyl-L-homocysteine. It functions in the pathway cofactor biosynthesis; biotin biosynthesis. Its function is as follows. Converts the free carboxyl group of a malonyl-thioester to its methyl ester by transfer of a methyl group from S-adenosyl-L-methionine (SAM). It allows to synthesize pimeloyl-ACP via the fatty acid synthetic pathway. This is Malonyl-[acyl-carrier protein] O-methyltransferase from Laribacter hongkongensis (strain HLHK9).